Here is a 601-residue protein sequence, read N- to C-terminus: uncharacterized protein (601 aa).

3 helical membrane-spanning segments follow: residues 74–94 (IFFF…VFSI), 104–124 (VSFL…PNDG), and 531–551 (LVLL…NYYY).

It is found in the endoplasmic reticulum membrane. This is an uncharacterized protein from Schizosaccharomyces pombe (strain 972 / ATCC 24843) (Fission yeast).